The primary structure comprises 472 residues: Serine/threonine-protein kinase ULK3 (472 aa).

The Protein kinase domain occupies 14-270 (FILTERLGSG…FKDFFAHPWV (257 aa)). ATP is bound by residues 20 to 28 (LGSGTYATV) and K44. D137 (proton acceptor) is an active-site residue. A Phosphoserine modification is found at S176. The 69-residue stretch at 280–348 (SLAQARALVV…SRAEELKAIV (69 aa)) folds into the MIT 1 domain. Residues S350, S384, and S464 each carry the phosphoserine; by autocatalysis modification. Residues 375-444 (RLLAALEVAS…ARAEYLKEQI (70 aa)) form the MIT 2 domain.

It belongs to the protein kinase superfamily. Ser/Thr protein kinase family. APG1/unc-51/ULK1 subfamily. Interacts (via protein kinase domain) with SUFU. Autophosphorylated. Autophosphorylation is blocked by interaction with SUFU.

It localises to the cytoplasm. The enzyme catalyses L-seryl-[protein] + ATP = O-phospho-L-seryl-[protein] + ADP + H(+). It catalyses the reaction L-threonyl-[protein] + ATP = O-phospho-L-threonyl-[protein] + ADP + H(+). Functionally, serine/threonine protein kinase that acts as a regulator of Sonic hedgehog (SHH) signaling and autophagy. Acts as a negative regulator of SHH signaling in the absence of SHH ligand: interacts with SUFU, thereby inactivating the protein kinase activity and preventing phosphorylation of GLI proteins (GLI1, GLI2 and/or GLI3). Positively regulates SHH signaling in the presence of SHH: dissociates from SUFU, autophosphorylates and mediates phosphorylation of GLI2, activating it and promoting its nuclear translocation. Phosphorylates in vitro GLI2, as well as GLI1 and GLI3, although less efficiently. Also acts as a regulator of autophagy: following cellular senescence, able to induce autophagy. In Mus musculus (Mouse), this protein is Serine/threonine-protein kinase ULK3 (Ulk3).